A 595-amino-acid polypeptide reads, in one-letter code: MSQAYQPDSTKTSAKKSSAVTLNPPKRKTLMRLLAYLKPYWWAILLTITGFAINAGTEIWIAKLLQYITDAINQNDQSKQGLFPFIIVMLFFVRGVGSFLGNYYTALVSRNLVYELRVEVFNKLLRLPSSFYLANPAGTISSKLIFDVEQVTAASTDSLKTLLRDGLTVIALMGFLLYSNWRLTLILFVVLPPILWIIRVASKRYLKLSKGIQATMGGVSHITNEVINGYQVVKNYGGQAYESKRFDEVSKKNLRQGMKIVVTNSINTPAVQLLMAVAMAVVVWLALRPAVIDDISAGQFISYIAAAGLLSKPVRSLTDVNQQLQRGIAAGESIFALLDEPEEEDTGVLSPALVGEIKLDNISLVYPDSTVALHDFNLDIRAGETVALVGRSGAGKSSLVNLLTRTLSTSSGQITLDGMPIEDIKLESLRAQIAMVNQQVVLFNTTVFNNIAYGSLAHKTPAEVEQAAKDAFAHDFIMQMPNGYQSEIGAEGLQLSGGQRQRLSIARALLKDAPILILDEATSALDNESEYYIQKALDNIMRNRTTLVIAHRLTTIESADRIAVLDGGRIVELGTHAELMQLHGHYAQMYARDFE.

A disordered region spans residues 1–20 (MSQAYQPDSTKTSAKKSSAV). Residues 9 to 19 (STKTSAKKSSA) are compositionally biased toward low complexity. The next 4 membrane-spanning stretches (helical) occupy residues 41-61 (WWAI…EIWI), 81-101 (GLFP…SFLG), 169-189 (VIAL…ILFV), and 266-286 (INTP…VWLA). Positions 45-326 (LLTITGFAIN…LTDVNQQLQR (282 aa)) constitute an ABC transmembrane type-1 domain. Residues 357–592 (IKLDNISLVY…HGHYAQMYAR (236 aa)) enclose the ABC transporter domain. Residue 390–397 (GRSGAGKS) participates in ATP binding.

Belongs to the ABC transporter superfamily. Lipid exporter (TC 3.A.1.106) family. Homodimer.

It localises to the cell inner membrane. It catalyses the reaction ATP + H2O + lipid A-core oligosaccharideSide 1 = ADP + phosphate + lipid A-core oligosaccharideSide 2.. Its function is as follows. Involved in lipopolysaccharide (LPS) biosynthesis. Translocates lipid A-core from the inner to the outer leaflet of the inner membrane. Transmembrane domains (TMD) form a pore in the inner membrane and the ATP-binding domain (NBD) is responsible for energy generation. This chain is ATP-dependent lipid A-core flippase, found in Psychrobacter arcticus (strain DSM 17307 / VKM B-2377 / 273-4).